The following is a 393-amino-acid chain: NAD(P)H-quinone oxidoreductase subunit H, chloroplastic (393 aa).

This sequence belongs to the complex I 49 kDa subunit family. NDH is composed of at least 16 different subunits, 5 of which are encoded in the nucleus.

The protein localises to the plastid. The protein resides in the chloroplast thylakoid membrane. The enzyme catalyses a plastoquinone + NADH + (n+1) H(+)(in) = a plastoquinol + NAD(+) + n H(+)(out). The catalysed reaction is a plastoquinone + NADPH + (n+1) H(+)(in) = a plastoquinol + NADP(+) + n H(+)(out). Its function is as follows. NDH shuttles electrons from NAD(P)H:plastoquinone, via FMN and iron-sulfur (Fe-S) centers, to quinones in the photosynthetic chain and possibly in a chloroplast respiratory chain. The immediate electron acceptor for the enzyme in this species is believed to be plastoquinone. Couples the redox reaction to proton translocation, and thus conserves the redox energy in a proton gradient. In Piper cenocladum (Ant piper), this protein is NAD(P)H-quinone oxidoreductase subunit H, chloroplastic.